We begin with the raw amino-acid sequence, 117 residues long: Large ribosomal subunit protein bL20 (117 aa).

This sequence belongs to the bacterial ribosomal protein bL20 family.

In terms of biological role, binds directly to 23S ribosomal RNA and is necessary for the in vitro assembly process of the 50S ribosomal subunit. It is not involved in the protein synthesizing functions of that subunit. The polypeptide is Large ribosomal subunit protein bL20 (Geobacter metallireducens (strain ATCC 53774 / DSM 7210 / GS-15)).